Reading from the N-terminus, the 930-residue chain is Polypeptide N-acetylgalactosaminyltransferase 5 (930 aa).

Residues M1–G12 lie on the Cytoplasmic side of the membrane. The helical; Signal-anchor for type II membrane protein transmembrane segment at R13–L35 threads the bilayer. Residues S36 to V930 lie on the Lumenal side of the membrane. The segment at K190–E209 is disordered. Positions A193 to E209 are enriched in polar residues. Residues N198, N213, and N283 are each glycosylated (N-linked (GlcNAc...) asparagine). A Phosphoserine modification is found at S285. N287, N309, N355, and N387 each carry an N-linked (GlcNAc...) asparagine glycan. Residues D327–L381 are disordered. The span at P353–P363 shows a compositional bias: polar residues. Intrachain disulfides connect C476–C708, C699–C779, and C812–C825. A catalytic subdomain A region spans residues L485–R594. Substrate-binding residues include D526 and R555. N-linked (GlcNAc...) asparagine glycosylation occurs at N568. D578 contacts Mn(2+). Substrate is bound at residue S579. H580 contacts Mn(2+). A catalytic subdomain B region spans residues I654 to R716. W685 is a substrate binding site. Mn(2+) is bound at residue H713. Substrate-binding residues include R716 and Y721. N-linked (GlcNAc...) asparagine glycans are attached at residues N766, N817, and N835. Residues K794–E925 enclose the Ricin B-type lectin domain. Disulfide bonds link C848/C863 and C898/C913. N902 is a glycosylation site (N-linked (GlcNAc...) asparagine).

Belongs to the glycosyltransferase 2 family. GalNAc-T subfamily. As to quaternary structure, interacts with EXT2. Does not interact with EXT1, EXTL1 or EXTL3. Requires Mn(2+) as cofactor. In terms of tissue distribution, expressed at low level. Not expressed before E7.5 during embryogenesis. Expressed in dental mesenchyme and tongue. Accumulates in a subset of mesenchymal cells at the ventral-most portions of the 12.5 dpc maxilla and mandible underlying the dental lamina.

It is found in the golgi apparatus membrane. The enzyme catalyses L-seryl-[protein] + UDP-N-acetyl-alpha-D-galactosamine = a 3-O-[N-acetyl-alpha-D-galactosaminyl]-L-seryl-[protein] + UDP + H(+). The catalysed reaction is L-threonyl-[protein] + UDP-N-acetyl-alpha-D-galactosamine = a 3-O-[N-acetyl-alpha-D-galactosaminyl]-L-threonyl-[protein] + UDP + H(+). The protein operates within protein modification; protein glycosylation. Functionally, catalyzes the initial reaction in O-linked oligosaccharide biosynthesis, the transfer of an N-acetyl-D-galactosamine residue to a serine or threonine residue on the protein receptor. Has activity toward EA2 peptide substrate, but has a weak activity toward Muc2 or Muc1b substrates. This Mus musculus (Mouse) protein is Polypeptide N-acetylgalactosaminyltransferase 5 (Galnt5).